Consider the following 401-residue polypeptide: Solute carrier family 22 member 17 (401 aa).

The next 10 membrane-spanning stretches (helical) occupy residues G10 to G30, I35 to L55, V69 to L89, M100 to S120, N184 to R203, F218 to V238, G247 to W267, T277 to A297, G309 to L329, and F336 to L356.

It belongs to the major facilitator (TC 2.A.1) superfamily. Organic cation transporter (TC 2.A.1.19) family. In terms of tissue distribution, widely expressed.

It localises to the cell membrane. The protein localises to the vacuole membrane. In terms of biological role, cell surface receptor for LCN2 (24p3) that plays a key role in iron homeostasis and transport. Able to bind iron-bound LCN2 (holo-24p3), followed by internalization of holo-24p3 and release of iron, thereby increasing intracellular iron concentration and leading to inhibition of apoptosis. Also binds iron-free LCN2 (apo-24p3), followed by internalization of apo-24p3 and its association with an intracellular siderophore, leading to iron chelation and iron transfer to the extracellular medium, thereby reducing intracellular iron concentration and resulting in apoptosis. In Mus musculus (Mouse), this protein is Solute carrier family 22 member 17 (Slc22a17).